A 368-amino-acid polypeptide reads, in one-letter code: Spermidine/putrescine import ATP-binding protein PotA (368 aa).

The 231-residue stretch at I8 to V238 folds into the ABC transporter domain. ATP is bound at residue G40 to T47.

This sequence belongs to the ABC transporter superfamily. Spermidine/putrescine importer (TC 3.A.1.11.1) family. In terms of assembly, the complex is composed of two ATP-binding proteins (PotA), two transmembrane proteins (PotB and PotC) and a solute-binding protein (PotD).

The protein localises to the cell membrane. It carries out the reaction ATP + H2O + polyamine-[polyamine-binding protein]Side 1 = ADP + phosphate + polyamineSide 2 + [polyamine-binding protein]Side 1.. Part of the ABC transporter complex PotABCD involved in spermidine/putrescine import. Responsible for energy coupling to the transport system. This Lawsonia intracellularis (strain PHE/MN1-00) protein is Spermidine/putrescine import ATP-binding protein PotA.